Reading from the N-terminus, the 114-residue chain is Iron-sulfur cluster insertion protein ErpA (114 aa).

Residues C42, C106, and C108 each coordinate iron-sulfur cluster.

The protein belongs to the HesB/IscA family. In terms of assembly, homodimer. Requires iron-sulfur cluster as cofactor.

Functionally, required for insertion of 4Fe-4S clusters for at least IspG. In Klebsiella pneumoniae subsp. pneumoniae (strain ATCC 700721 / MGH 78578), this protein is Iron-sulfur cluster insertion protein ErpA.